The sequence spans 487 residues: METVQLRNPPRRQLKKLDEDSLTKQPEEVFDVLEKLGEGSYGSVYKAIHKETGQIVAIKQVPVESDLQEIIKEISIMQQCDSPHVVKYYGSYFKNTDLWIVMEYCGAGSVSDIIRLRNKTLTEDEIATILQSTLKGLEYLHFMRKIHRDIKAGNILLNTEGHAKLADFGVAGQLTDTMAKRNTVIGTPFWMAPEVIQEIGYNCVADIWSLGITAIEMAEGKPPYADIHPMRAIFMIPTNPPPTFRKPELWSDNFTDFVKQCLVKSPEQRATATQLLQHPFVKSAKGVSILRDLINEAMDVKLKRQESQQREVDQDDEENSEEDEMDSGTMVRAVGDEMGTVRVASTMTDGASTMIEHDDTLPSQLGTMVINTEDEEEEGTMKRRDETMQPAKPSFLEYFEQKEKENQINSFGKSVPGPLKNSSDWKIPQDGDYEFLKSWTVEDLQKRLLALDPMMEQEIEEIRQKYQSKRQPILDAIEAKKRRQQNF.

Residue methionine 1 is modified to N-acetylmethionine. A Phosphothreonine modification is found at threonine 3. Positions 30–281 constitute a Protein kinase domain; sequence FDVLEKLGEG…ATQLLQHPFV (252 aa). Residues 36–44 and lysine 59 each bind ATP; that span reads LGEGSYGSV. Aspartate 149 acts as the Proton acceptor in catalysis. Threonine 183 is subject to Phosphothreonine; by autocatalysis. Serine 265 bears the Phosphoserine mark. Residues 290-310 adopt a coiled-coil conformation; sequence LRDLINEAMDVKLKRQESQQR. Basic and acidic residues predominate over residues 303–312; sequence KRQESQQREV. Positions 303 to 332 are disordered; it reads KRQESQQREVDQDDEENSEEDEMDSGTMVR. Residues 313–326 are compositionally biased toward acidic residues; the sequence is DQDDEENSEEDEMD. Serine 320 carries the phosphoserine modification. Phosphothreonine occurs at positions 340 and 367. Threonine 387 carries the post-translational modification Phosphothreonine; by PKB/AKT1. Phosphoserine is present on residues serine 410 and serine 414. Tyrosine 433 is modified (phosphotyrosine). Positions 433-480 constitute an SARAH domain; the sequence is YEFLKSWTVEDLQKRLLALDPMMEQEIEEIRQKYQSKRQPILDAIEAK.

Belongs to the protein kinase superfamily. STE Ser/Thr protein kinase family. STE20 subfamily. In terms of assembly, homodimer; mediated via the coiled-coil region. Interacts with NORE1, which inhibits autoactivation. Interacts with and stabilizes SAV1. Interacts with RASSF1. Interacts with FOXO3. Interacts with RASSF2 (via SARAH domain). Interacts with AR, PKB/AKT1, TNNI3 and SIRT1. Interacts with DLG5 (via PDZ domain 3). Interacts with MARK3 and SCRIB in the presence of DLG5. Mg(2+) serves as cofactor. In terms of processing, autophosphorylated on serine and threonine residues. Phosphorylation at Thr-387 by PKB/AKT1, leads to inhibition of its: kinase activity, nuclear translocation and autophosphorylation at Thr-183. It also diminishes its cleavage by caspases and its ability to phosphorylate FOXO3. Post-translationally, proteolytically cleaved by caspase-3 during apoptosis at Asp-326 and Asp-349 resulting in a 37 kDa or a 39 kDa subunit respectively. The 39 kDa subunit is further cleaved into the 37 kDa form. Proteolytic cleavage results in kinase activation and nuclear translocation of the truncated form (MST1/N). It is less likely that cleavage at Asp-349 is a prerequisite for activation as this site is not conserved in the murine ortholog.

Its subcellular location is the cytoplasm. The protein localises to the nucleus. It carries out the reaction L-seryl-[protein] + ATP = O-phospho-L-seryl-[protein] + ADP + H(+). The catalysed reaction is L-threonyl-[protein] + ATP = O-phospho-L-threonyl-[protein] + ADP + H(+). Its activity is regulated as follows. Inhibited by the C-terminal non-catalytic region. Activated by caspase-cleavage. Full activation also requires homodimerization and autophosphorylation of Thr-183. Activated by RASSF1 which acts by preventing its dephosphorylation. In terms of biological role, stress-activated, pro-apoptotic kinase which, following caspase-cleavage, enters the nucleus and induces chromatin condensation followed by internucleosomal DNA fragmentation. Key component of the Hippo signaling pathway which plays a pivotal role in organ size control and tumor suppression by restricting proliferation and promoting apoptosis. The core of this pathway is composed of a kinase cascade wherein STK3/MST2 and STK4/MST1, in complex with its regulatory protein SAV1, phosphorylates and activates LATS1/2 in complex with its regulatory protein MOB1, which in turn phosphorylates and inactivates YAP1 oncoprotein and WWTR1/TAZ. Phosphorylation of YAP1 by LATS2 inhibits its translocation into the nucleus to regulate cellular genes important for cell proliferation, cell death, and cell migration. STK3/MST2 and STK4/MST1 are required to repress proliferation of mature hepatocytes, to prevent activation of facultative adult liver stem cells (oval cells), and to inhibit tumor formation. Phosphorylates 'Ser-14' of histone H2B (H2BS14ph) during apoptosis. Phosphorylates FOXO3 upon oxidative stress, which results in its nuclear translocation and cell death initiation. Phosphorylates MOBKL1A, MOBKL1B and RASSF2. Phosphorylates TNNI3 (cardiac Tn-I) and alters its binding affinity to TNNC1 (cardiac Tn-C) and TNNT2 (cardiac Tn-T). Phosphorylates FOXO1 on 'Ser-212' and regulates its activation and stimulates transcription of PMAIP1 in a FOXO1-dependent manner. Phosphorylates SIRT1 and inhibits SIRT1-mediated p53/TP53 deacetylation, thereby promoting p53/TP53 dependent transcription and apoptosis upon DNA damage. Acts as an inhibitor of PKB/AKT1. Phosphorylates AR on 'Ser-650' and suppresses its activity by intersecting with PKB/AKT1 signaling and antagonizing formation of AR-chromatin complexes. In Macaca mulatta (Rhesus macaque), this protein is Serine/threonine-protein kinase 4 (STK4).